A 492-amino-acid polypeptide reads, in one-letter code: JmjC domain-containing histone demethylation protein 1 (492 aa).

The PHD-type; atypical zinc finger occupies proline 4 to glycine 72. Residues threonine 254–lysine 409 enclose the JmjC domain. Substrate is bound at residue threonine 302. Residues histidine 305 and aspartate 307 each contribute to the Fe cation site. Lysine 322 contacts substrate. Histidine 377 contributes to the Fe cation binding site.

Belongs to the JHDM1 histone demethylase family. It depends on Fe(2+) as a cofactor.

The protein localises to the nucleus. It carries out the reaction N(6),N(6)-dimethyl-L-lysyl(36)-[histone H3] + 2 2-oxoglutarate + 2 O2 = L-lysyl(36)-[histone H3] + 2 formaldehyde + 2 succinate + 2 CO2. Its function is as follows. Histone demethylase that specifically demethylates 'Lys-36' of histone H3, thereby playing a central role in histone code. Does not demethylate H3 'Lys-4' nor 'Lys-79'. The protein is JmjC domain-containing histone demethylation protein 1 (JHD1) of Saccharomyces cerevisiae (strain ATCC 204508 / S288c) (Baker's yeast).